A 295-amino-acid polypeptide reads, in one-letter code: UDP-N-acetylenolpyruvoylglucosamine reductase (295 aa).

Residues lysine 23–glycine 188 form the FAD-binding PCMH-type domain. The active site involves arginine 167. Serine 217 functions as the Proton donor in the catalytic mechanism. Glutamate 287 is a catalytic residue.

Belongs to the MurB family. FAD is required as a cofactor.

It is found in the cytoplasm. The catalysed reaction is UDP-N-acetyl-alpha-D-muramate + NADP(+) = UDP-N-acetyl-3-O-(1-carboxyvinyl)-alpha-D-glucosamine + NADPH + H(+). It participates in cell wall biogenesis; peptidoglycan biosynthesis. Functionally, cell wall formation. In Streptococcus pyogenes serotype M6 (strain ATCC BAA-946 / MGAS10394), this protein is UDP-N-acetylenolpyruvoylglucosamine reductase.